Reading from the N-terminus, the 495-residue chain is Lysine--tRNA ligase (495 aa).

Residues Glu-406 and Glu-413 each coordinate Mg(2+).

Belongs to the class-II aminoacyl-tRNA synthetase family. As to quaternary structure, homodimer. Mg(2+) is required as a cofactor.

It localises to the cytoplasm. The enzyme catalyses tRNA(Lys) + L-lysine + ATP = L-lysyl-tRNA(Lys) + AMP + diphosphate. In Staphylococcus aureus (strain COL), this protein is Lysine--tRNA ligase.